The following is a 190-amino-acid chain: Photosynthetic NDH subunit of lumenal location 2, chloroplastic (190 aa).

The N-terminal 31 residues, 1 to 31 (MSSFTTTNTPPPYLLRKIYHRRVNQPFSVVC), are a transit peptide targeting the chloroplast. The transit peptide at 32–68 (CTGEPQQDIFTRRRTLTSLITFTVIGGATSSALAQEK) directs the protein to the thylakoid. Coiled coils occupy residues 87–107 (EDAA…REML) and 139–159 (ESRR…MSEL).

The protein belongs to the PsbQ family. Part of the chloroplast NDH complex, composed of a mixture of chloroplast and nucleus encoded subunits. Component of the NDH lumenal subcomplex, at least composed of PnsL1, PnsL2, PnsL3, PnsL4 and PnsL5.

It is found in the plastid. The protein resides in the chloroplast thylakoid membrane. In terms of biological role, NDH shuttles electrons from NAD(P)H:plastoquinone, via FMN and iron-sulfur (Fe-S) centers, to quinones in the photosynthetic chain and possibly in a chloroplast respiratory chain. The immediate electron acceptor for the enzyme in this species is believed to be plastoquinone. Couples the redox reaction to proton translocation, and thus conserves the redox energy in a proton gradient. Required for both formation and activity of the chloroplast NAD(P)H dehydrogenase (NDH) complex. This chain is Photosynthetic NDH subunit of lumenal location 2, chloroplastic, found in Arabidopsis thaliana (Mouse-ear cress).